The chain runs to 449 residues: Xylose isomerase (449 aa).

Residues His101 and Asp104 contribute to the active site. Residues Glu232, Glu268, His271, Asp296, Asp307, Asp309, and Asp340 each contribute to the Mg(2+) site.

It belongs to the xylose isomerase family. Homotetramer. It depends on Mg(2+) as a cofactor.

It is found in the cytoplasm. It carries out the reaction alpha-D-xylose = alpha-D-xylulofuranose. The protein is Xylose isomerase of Bifidobacterium longum (strain NCC 2705).